We begin with the raw amino-acid sequence, 1722 residues long: Signal-induced proliferation-associated 1-like protein 2 (1722 aa).

2 disordered regions span residues 1-29 (MSDPRPSQAEKHKLGRAASKFKDPSRAMQ) and 45-73 (MGPATLNTSSLSEGGGGGGGPANGTPAVP). Positions 57–66 (EGGGGGGGPA) are enriched in gly residues. Phosphoserine is present on residues S149, S380, and S384. A disordered region spans residues 362–404 (ASAASQTPVPVGPAGGCESPLGSKEDLNAKENPDADEGDGKSN). Positions 384 to 403 (SKEDLNAKENPDADEGDGKS) are enriched in basic and acidic residues. One can recognise a Rap-GAP domain in the interval 596 to 813 (LLKLDEQGLS…RTRHEYLKDL (218 aa)). In terms of domain architecture, PDZ spans 951–1027 (EMTLRRNGLG…VKVVIIQPHE (77 aa)). S1030 is subject to Phosphoserine. 3 disordered regions span residues 1068–1172 (HRVP…DHED), 1197–1246 (ERAL…FGSG), and 1328–1361 (AADGSMGDLSEVSSHSSGSHRSGSPSTHCSKSTG). Composition is skewed to low complexity over residues 1091–1103 (LQCQPLLQQAQAA) and 1120–1131 (SSPSNQSSSSDP). The span at 1197–1218 (ERALQKDGSCKDSPNKLSHIGD) shows a compositional bias: basic and acidic residues. A compositionally biased stretch (low complexity) spans 1220 to 1237 (SCSSHSSSNTLSSNTSSN). Position 1245 is a phosphoserine (S1245). Low complexity predominate over residues 1328–1355 (AADGSMGDLSEVSSHSSGSHRSGSPSTH). Phosphoserine occurs at positions 1461, 1472, 1478, 1488, 1549, 1552, and 1591. Residues 1652 to 1712 (STLTGKVNQL…ATAQLRTFTE (61 aa)) adopt a coiled-coil conformation.

The sequence is that of Signal-induced proliferation-associated 1-like protein 2 (Sipa1l2) from Rattus norvegicus (Rat).